The primary structure comprises 234 residues: Pepsin inhibitor Dit33 (234 aa).

The N-terminal stretch at 1–17 (MKILFCFVLLAIAALRA) is a signal peptide. Cys-135 and Cys-230 are oxidised to a cystine. A disordered region spans residues 200 to 222 (RHETSSQPSDATTISTTTQAPVE). The span at 204 to 219 (SSQPSDATTISTTTQA) shows a compositional bias: polar residues.

Belongs to the protease inhibitor I33 family.

The protein localises to the secreted. Aspartyl protease inhibitor. The chain is Pepsin inhibitor Dit33 (DIT33) from Dirofilaria immitis (Canine heartworm).